Here is a 483-residue protein sequence, read N- to C-terminus: Low-density lipoprotein receptor-related protein 11 (483 aa).

The first 32 residues, 1–32 (MATRGGGPGPGFRHRALRGLLLLCLWLPGSRP), serve as a signal peptide directing secretion. The Extracellular segment spans residues 33-433 (GEPAAPSSGV…GGEHPAPEAG (401 aa)). The 88-residue stretch at 85–172 (AVPDTIIRTQ…FAPLRGYRTY (88 aa)) folds into the MANSC domain. 2 N-linked (GlcNAc...) asparagine glycosylation sites follow: asparagine 152 and asparagine 275. A PKD domain is found at 193–287 (PVSKAGKDVV…VTVLPRPYST (95 aa)). An LDL-receptor class A domain is found at 293-329 (ACSRYHFFCDSGCCIDIALACDGVRQCPDGSDEDFCQ). Intrachain disulfides connect cysteine 294–cysteine 306, cysteine 301–cysteine 319, and cysteine 313–cysteine 328. The interval 346–428 (AQPGAMGLNE…KSGQAGGEHP (83 aa)) is disordered. Composition is skewed to polar residues over residues 367 to 376 (RATTHNQPAT) and 385 to 407 (HSTQ…SSGK). A glycan (N-linked (GlcNAc...) asparagine) is linked at asparagine 403. Basic and acidic residues predominate over residues 408-418 (NQEEGNYDLKS). The chain crosses the membrane as a helical span at residues 434–456 (AVLPLALGLAITVLLLLMVTCRL). The Cytoplasmic segment spans residues 457–483 (RLVKQKLKKARPITSEESDYLINGMYL). Serine 474 is modified (phosphoserine).

The protein belongs to the LDLR family.

Its subcellular location is the membrane. This chain is Low-density lipoprotein receptor-related protein 11 (Lrp11), found in Mus musculus (Mouse).